We begin with the raw amino-acid sequence, 370 residues long: Zinc finger protein 830 (370 aa).

2 disordered regions span residues 1–21 and 75–220; these read MASS…QEEL and HRER…LVPH. Ala2 bears the N-acetylalanine mark. Residues 16–40 adopt a coiled-coil conformation; sequence VNQEELRRLMKEKQRLSTNRKRIES. The C2H2-type zinc-finger motif lies at 53-75; the sequence is CALCNTPVKSELLWQTHVLGKQH. Polar residues predominate over residues 90–99; the sequence is QGPSAGTAPQ. Basic and acidic residues predominate over residues 104-115; the sequence is KTTDVESQDAKK. Over residues 121-134 the composition is skewed to polar residues; that stretch reads DQVQPSTSASSANF. Residues 156 to 171 show a composition bias toward acidic residues; the sequence is DYEEEEEEEEEEELGG. Over residues 172-191 the composition is skewed to basic and acidic residues; that stretch reads GEERRDSSKHLPDAQGREHS. Polar residues predominate over residues 196–212; sequence RETTSNVLPNDPFNTNP. The residue at position 223 (Ser223) is a Phosphoserine. Residues 310-338 adopt a coiled-coil conformation; that stretch reads IECYRRVEKLRNRQDEIKNKLKEVLTIKE. Ser349 and Ser360 each carry phosphoserine.

Component of the XAB2 complex, a multimeric protein complex composed of XAB2, PRPF19, AQR, ZNF830, ISY1, and PPIE; this complex binds preferentially to RNA. Interacts with XAB2. Identified in a pentameric intron-binding (IB) complex composed of AQR, XAB2, ISY1, ZNF830 and PPIE that is incorporated into the spliceosome as a preassembled complex. The IB complex does not contain PRPF19. Post-translationally, phosphorylated in response to DNA damage by the cell cycle checkpoint kinases ATR/ATM.

It localises to the nucleus. Its subcellular location is the chromosome. The protein resides in the nucleus speckle. In terms of biological role, may play a role in pre-mRNA splicing as component of the spliceosome. Acts as an important regulator of the cell cycle that participates in the maintenance of genome integrity. During cell cycle progression in embryonic fibroblast, prevents replication fork collapse, double-strand break formation and cell cycle checkpoint activation. Controls mitotic cell cycle progression and cell survival in rapidly proliferating intestinal epithelium and embryonic stem cells. During the embryo preimplantation, controls different aspects of M phase. During early oocyte growth, plays a role in oocyte survival by preventing chromosomal breaks formation, activation of TP63 and reduction of transcription. The chain is Zinc finger protein 830 from Rattus norvegicus (Rat).